Consider the following 268-residue polypeptide: 4-hydroxy-tetrahydrodipicolinate reductase (268 aa).

NAD(+)-binding positions include 8-13 (GAAGRM) and Glu34. Arg35 is an NADP(+) binding site. NAD(+)-binding positions include 96–98 (GST) and 120–123 (SPNM). His153 serves as the catalytic Proton donor/acceptor. His154 is a (S)-2,3,4,5-tetrahydrodipicolinate binding site. The active-site Proton donor is the Lys157. 163-164 (GT) provides a ligand contact to (S)-2,3,4,5-tetrahydrodipicolinate.

Belongs to the DapB family.

The protein localises to the cytoplasm. The catalysed reaction is (S)-2,3,4,5-tetrahydrodipicolinate + NAD(+) + H2O = (2S,4S)-4-hydroxy-2,3,4,5-tetrahydrodipicolinate + NADH + H(+). It carries out the reaction (S)-2,3,4,5-tetrahydrodipicolinate + NADP(+) + H2O = (2S,4S)-4-hydroxy-2,3,4,5-tetrahydrodipicolinate + NADPH + H(+). The protein operates within amino-acid biosynthesis; L-lysine biosynthesis via DAP pathway; (S)-tetrahydrodipicolinate from L-aspartate: step 4/4. Functionally, catalyzes the conversion of 4-hydroxy-tetrahydrodipicolinate (HTPA) to tetrahydrodipicolinate. In Anaeromyxobacter sp. (strain Fw109-5), this protein is 4-hydroxy-tetrahydrodipicolinate reductase.